A 242-amino-acid chain; its full sequence is Peptidyl-prolyl cis-trans isomerase FKBP20-2, chloroplastic (242 aa).

Residues 1 to 31 constitute a chloroplast transit peptide; that stretch reads MVTILSTPLSPRLTFLCETKLSLSRSNRSVC. The transit peptide at 32-67 directs the protein to the thylakoid; the sequence is CSLSEEPKDQCLSRRSLVYVLVASPCLLLPALSSSA. The PPIase FKBP-type domain maps to 138–225; it reads GQQVTFHYIG…VFDVELLSIQ (88 aa). A disulfide bridge connects residues Cys227 and Cys241.

It belongs to the FKBP-type PPIase family. Interacts in vitro with LTO1.

The protein resides in the plastid. It is found in the chloroplast thylakoid lumen. It catalyses the reaction [protein]-peptidylproline (omega=180) = [protein]-peptidylproline (omega=0). Functionally, PPIases accelerate the folding of proteins. It catalyzes the cis-trans isomerization of proline imidic peptide bonds in oligopeptides. Involved in the accumulation of the PSII complex. This Arabidopsis thaliana (Mouse-ear cress) protein is Peptidyl-prolyl cis-trans isomerase FKBP20-2, chloroplastic.